We begin with the raw amino-acid sequence, 209 residues long: Abscisic acid receptor PYL5 (209 aa).

An START-like region spans residues 44–196; it reads HAPGEHQCSS…NLTSLAEVSE (153 aa). C51 and C177 form a disulfide bridge. Abscisate is bound by residues K80, 109 to 114, 136 to 142, and E161; these read ATTSTE and RLRNYSS. The Gate loop motif lies at 105-109; sequence TGLPA. The short motif at 135-137 is the Latch loop element; the sequence is HRL.

The protein belongs to the PYR/PYL/RCAR abscisic acid intracellular receptor family. In terms of assembly, monomer. Interacts with PP2C30. Binding to PP2C30 is dependent on the presence of abscisic acid (ABA). Interacts with PP2C51. Binding to PP2C51 is dependent on the presence of ABA. Interacts with PP2C50. Binding to PP2C50 is dependent on the presence of ABA. Interacts with PP2C53. Expressed in leaf sheaths and leaf blades. Expressed at low levels in roots, flowers and seeds.

The protein resides in the nucleus. It is found in the cytoplasm. The protein localises to the cytosol. In terms of biological role, intracellular abscisic acid (ABA) receptor that functions as a positive regulator of ABA signaling pathway. Together with ABI5, PP2C30 and SAPK2, is part of an ABA signaling unit that modulates seed germination and early seedling growth. Acts as a positive regulator of abiotic stress-responsive gene expression. Inhibits the protein phosphatases PP2C06 and PP2C09 when activated by ABA. The chain is Abscisic acid receptor PYL5 from Oryza sativa subsp. japonica (Rice).